A 377-amino-acid polypeptide reads, in one-letter code: MKSVALVTEYNPFHNGHLYHAQQSKSITNSDISIAIMSGNFVMRGQPAIYNKFTRAKMALRAVDLVVELPAYASVSAGQYFAKTAVQIADYLNVSHLSFGSESGNMDDFLSLAQSIDKIEQSPLFLEKLKEGKSYPRILSELITDNDLLSSPNNTLGLSYVRAIQTYAPSIQPWTISRFQSAHHDNEISHQTFASGTSIRQSLMNQTDLWKDVVPCEIHKHYERPHISIEDTFNYLKYAILSQDATSLAQIYTMSEGIENRILQTIEQATSFEHLMTLLKTKRYTYTHIQRLLMNILLNFKKHDEPASINAVRILGMSERGQQYLKQIKKSFPERNFVTQVNKQNANLFTNEIHATKIYNLISGQTANDFNTPVIRI.

ATP contacts are provided by residues 7–20 (VTEYNPFHNGHLYH), Gly100, Asn153, and Arg178.

The protein belongs to the TmcAL family.

The protein localises to the cytoplasm. It catalyses the reaction cytidine(34) in elongator tRNA(Met) + acetate + ATP = N(4)-acetylcytidine(34) in elongator tRNA(Met) + AMP + diphosphate. In terms of biological role, catalyzes the formation of N(4)-acetylcytidine (ac(4)C) at the wobble position of elongator tRNA(Met), using acetate and ATP as substrates. First activates an acetate ion to form acetyladenylate (Ac-AMP) and then transfers the acetyl group to tRNA to form ac(4)C34. This chain is tRNA(Met) cytidine acetate ligase, found in Staphylococcus saprophyticus subsp. saprophyticus (strain ATCC 15305 / DSM 20229 / NCIMB 8711 / NCTC 7292 / S-41).